Consider the following 1526-residue polypeptide: Probable autotransporter YpjA (1526 aa).

Positions 1 to 29 (MNRTSPYYCRRSVLSLLISALIYAPPGMA) are cleaved as a signal peptide. The interval 1173–1223 (NSNWNLTNDVKPNPDPIPNPKPDPKPDPKPDPNPKPDPTPDPTPTPVPEKR) is disordered. Residues 1194–1206 (PDPKPDPKPDPNP) are compositionally biased toward basic and acidic residues. Pro residues predominate over residues 1207 to 1219 (KPDPTPDPTPTPV). The Autotransporter domain occupies 1258–1526 (ASPHNNNVWG…NAVAGVNWSF (269 aa)).

The protein resides in the cell outer membrane. In terms of biological role, upon overexpression shows increased adherence to polyvinyl chloride (PVC) plates, increased mature biofilm formation. This chain is Probable autotransporter YpjA (ypjA), found in Escherichia coli (strain K12).